Reading from the N-terminus, the 101-residue chain is Small ribosomal subunit protein uS14 (101 aa).

This sequence belongs to the universal ribosomal protein uS14 family. Part of the 30S ribosomal subunit. Contacts proteins S3 and S10.

In terms of biological role, binds 16S rRNA, required for the assembly of 30S particles and may also be responsible for determining the conformation of the 16S rRNA at the A site. The sequence is that of Small ribosomal subunit protein uS14 from Orientia tsutsugamushi (strain Ikeda) (Rickettsia tsutsugamushi).